A 584-amino-acid chain; its full sequence is Eukaryotic translation initiation factor 3 subunit D (584 aa).

Positions 118–184 (IFTRGRGQRG…KDYDKPQRNR (67 aa)) are disordered. The span at 127–167 (GRGGQDTRGGGRQQFQRGGRGGQQYGGGGYSDRGGGRGGGA) shows a compositional bias: gly residues. A compositionally biased stretch (basic and acidic residues) spans 173 to 184 (GWKDYDKPQRNR). Residues 312–326 (ALDMVTVNENAADAP) are RNA gate. The disordered stretch occupies residues 563-584 (PANGLDDDDEGPEPEGVAEEED). Acidic residues predominate over residues 567-584 (LDDDDEGPEPEGVAEEED).

Belongs to the eIF-3 subunit D family. In terms of assembly, component of the eukaryotic translation initiation factor 3 (eIF-3) complex.

Its subcellular location is the cytoplasm. Its function is as follows. mRNA cap-binding component of the eukaryotic translation initiation factor 3 (eIF-3) complex, which is involved in protein synthesis of a specialized repertoire of mRNAs and, together with other initiation factors, stimulates binding of mRNA and methionyl-tRNAi to the 40S ribosome. The eIF-3 complex specifically targets and initiates translation of a subset of mRNAs involved in cell proliferation. In the eIF-3 complex, eif3d specifically recognizes and binds the 7-methylguanosine cap of a subset of mRNAs. In Chaetomium globosum (strain ATCC 6205 / CBS 148.51 / DSM 1962 / NBRC 6347 / NRRL 1970) (Soil fungus), this protein is Eukaryotic translation initiation factor 3 subunit D.